The sequence spans 180 residues: Cuticle protein 3 (180 aa).

Residues 1-16 (MMKLIVLAAFIGVCAG) form the signal peptide. The Chitin-binding type R&amp;R domain maps to 58 to 121 (EQGFRYAYET…PQGAHFPTPP (64 aa)).

The protein is Cuticle protein 3 of Lonomia obliqua (Moth).